Reading from the N-terminus, the 273-residue chain is NH(3)-dependent NAD(+) synthetase (273 aa).

Residue 47 to 54 (GISGGQDS) participates in ATP binding. Residue Asp53 participates in Mg(2+) binding. A deamido-NAD(+)-binding site is contributed by Arg139. An ATP-binding site is contributed by Thr159. Residue Glu164 coordinates Mg(2+). Residues Lys172 and Asp179 each coordinate deamido-NAD(+). 2 residues coordinate ATP: Lys188 and Thr210. 259-260 (HK) contacts deamido-NAD(+).

It belongs to the NAD synthetase family. In terms of assembly, homodimer.

The catalysed reaction is deamido-NAD(+) + NH4(+) + ATP = AMP + diphosphate + NAD(+) + H(+). It functions in the pathway cofactor biosynthesis; NAD(+) biosynthesis; NAD(+) from deamido-NAD(+) (ammonia route): step 1/1. Its function is as follows. Catalyzes the ATP-dependent amidation of deamido-NAD to form NAD. Uses ammonia as a nitrogen source. This is NH(3)-dependent NAD(+) synthetase from Staphylococcus aureus (strain MRSA252).